The sequence spans 346 residues: Probable electron transfer flavoprotein subunit alpha, mitochondrial (346 aa).

Leu-285 to Asp-313 serves as a coordination point for FAD.

It belongs to the ETF alpha-subunit/FixB family. As to quaternary structure, heterodimer of an alpha and a beta subunit. The cofactor is FAD.

The protein resides in the mitochondrion matrix. Its function is as follows. The electron transfer flavoprotein serves as a specific electron acceptor for several dehydrogenases, including five acyl-CoA dehydrogenases, glutaryl-CoA and sarcosine dehydrogenase. It transfers the electrons to the main mitochondrial respiratory chain via ETF-ubiquinone oxidoreductase (ETF dehydrogenase). The protein is Probable electron transfer flavoprotein subunit alpha, mitochondrial (ETF1) of Cryptococcus neoformans var. neoformans serotype D (strain B-3501A) (Filobasidiella neoformans).